A 435-amino-acid polypeptide reads, in one-letter code: Envelope glycoprotein M (435 aa).

Over 1-36 (MGTQKKGPRSEKVSPYDTTTPEVEALDHQMDTLNWR) the chain is Intravirion. Residues 37 to 57 (IWIIQVMMFTLGAVMLLATLI) form a helical membrane-spanning segment. Topologically, residues 58-111 (AASSEYTGIPCFYAAVVDYELFNATLDGGVWSGNRGGYSAPVLFLEPHSVVAFT) are virion surface. The helical transmembrane segment at 112–132 (YYTALTAMAMAVYTLITAAII) threads the bilayer. Topologically, residues 133–155 (HRETKNQRVRQSSGVAWLVVDPT) are intravirion. A helical membrane pass occupies residues 156 to 176 (TLFWGLLSLWLLNAVVLLLAY). The Virion surface portion of the chain corresponds to 177–178 (KQ). Residues 179 to 199 (IGVAATLYLGHFATSVIFTTY) traverse the membrane as a helical segment. Over 200-233 (FCGRGKLDETNIKAVANLRQQSVFLYRLAGPTRA) the chain is Intravirion. Residues 234-254 (VFVNLMAALMAICILFVSLML) traverse the membrane as a helical segment. Residues 255 to 265 (ELVVANHLHTG) are Virion surface-facing. A helical membrane pass occupies residues 266-288 (LWSSVSVAMSTFSTLSVVYLIVS). Topologically, residues 289–294 (ELILAH) are intravirion. A helical transmembrane segment spans residues 295-317 (YIHVLIGPSLGTLVACATLGTAA). Over 318 to 334 (HSYMDRLYDPISVQSPR) the chain is Virion surface. Residues 335 to 355 (LIPTTRGTLACLAVFSVVMLL) form a helical membrane-spanning segment. The Intravirion portion of the chain corresponds to 356 to 435 (LRLMRAYVYH…LYERSNSGWE (80 aa)).

Belongs to the herpesviridae glycoprotein M family. Interacts (via N-terminus) with gN (via N-terminus). The gM-gN heterodimer forms the gCII complex.

Its subcellular location is the virion membrane. The protein resides in the host Golgi apparatus. It localises to the host trans-Golgi network. It is found in the host endosome membrane. The protein localises to the host nucleus inner membrane. In terms of biological role, envelope glycoprotein important for virion assembly and egress. Plays a role in the correct incorporation of gH-gL into virion membrane. Directs the glycoprotein N (gN) to the host trans-Golgi network. This chain is Envelope glycoprotein M, found in Homo sapiens (Human).